Reading from the N-terminus, the 435-residue chain is Enolase (435 aa).

Gln163 is a (2R)-2-phosphoglycerate binding site. The active-site Proton donor is Glu205. Residues Asp243, Glu292, and Asp319 each contribute to the Mg(2+) site. 4 residues coordinate (2R)-2-phosphoglycerate: Lys344, Arg373, Ser374, and Lys395. The active-site Proton acceptor is Lys344.

It belongs to the enolase family. Mg(2+) serves as cofactor.

The protein resides in the cytoplasm. The protein localises to the secreted. It is found in the cell surface. The catalysed reaction is (2R)-2-phosphoglycerate = phosphoenolpyruvate + H2O. The protein operates within carbohydrate degradation; glycolysis; pyruvate from D-glyceraldehyde 3-phosphate: step 4/5. Its function is as follows. Catalyzes the reversible conversion of 2-phosphoglycerate (2-PG) into phosphoenolpyruvate (PEP). It is essential for the degradation of carbohydrates via glycolysis. In Streptococcus uberis (strain ATCC BAA-854 / 0140J), this protein is Enolase.